Reading from the N-terminus, the 477-residue chain is MKVNLPAFERAGVMVVGDVMLDRYWYGPTCRISPEAPVPVVKVNTVEERPGGAANVAMNIASLGANARLVGLTGIDDAARALSKTLAEVNVKCDFVSVPTHPTITKLRVLSRNQQLIRLDFEEGFEGVDPQPLHERINQALGSIGALVLSDYAKGALTSVQTMISLARQAGVPVLIDPKGTDFERYRGATLLTPNLSEFEAVAGKCKSEDELVERGMKLIADYDLSALLVTRSEQGMTLLQPNKAPLHMPTQAQEVYDVTGAGDTVIGVLAATLAAGNTLEEACYFANAAAGVVVGKLGTSTVSPIELENAVRGRADTGFGVMTEEELRQAVASARKRGEKVVMTNGVFDILHAGHVSYLANARKLGDRLIVAVNSDASTKRLKGESRPVNPLEQRMIVLGALESVDWVVSFEEDTPQRLIAGILPDLLVKGGDYKPEEIAGSEEVWANGGEVMVLNFEDGCSTTNIIKKIQTESEK.

Positions Met1 to Thr318 are ribokinase. Asn195–Glu198 is an ATP binding site. Residue Asp264 is part of the active site. The segment at Met344–Lys477 is cytidylyltransferase.

This sequence in the N-terminal section; belongs to the carbohydrate kinase PfkB family. It in the C-terminal section; belongs to the cytidylyltransferase family. As to quaternary structure, homodimer.

It carries out the reaction D-glycero-beta-D-manno-heptose 7-phosphate + ATP = D-glycero-beta-D-manno-heptose 1,7-bisphosphate + ADP + H(+). The catalysed reaction is D-glycero-beta-D-manno-heptose 1-phosphate + ATP + H(+) = ADP-D-glycero-beta-D-manno-heptose + diphosphate. It participates in nucleotide-sugar biosynthesis; ADP-L-glycero-beta-D-manno-heptose biosynthesis; ADP-L-glycero-beta-D-manno-heptose from D-glycero-beta-D-manno-heptose 7-phosphate: step 1/4. The protein operates within nucleotide-sugar biosynthesis; ADP-L-glycero-beta-D-manno-heptose biosynthesis; ADP-L-glycero-beta-D-manno-heptose from D-glycero-beta-D-manno-heptose 7-phosphate: step 3/4. Functionally, catalyzes the phosphorylation of D-glycero-D-manno-heptose 7-phosphate at the C-1 position to selectively form D-glycero-beta-D-manno-heptose-1,7-bisphosphate. Catalyzes the ADP transfer from ATP to D-glycero-beta-D-manno-heptose 1-phosphate, yielding ADP-D-glycero-beta-D-manno-heptose. In Salmonella agona (strain SL483), this protein is Bifunctional protein HldE.